The chain runs to 479 residues: MSSLVLRGVSRVEMPTISPTLGIYTRKFASQKILQRQFDVVIVGSGPVGLALAAGLQSNPVTQSLKVGLLDIQDTMKLKDWKFETYSNRCSSLTNHTRMFFDKIGAWDFARKDRIQPFQHILASDGLTNSSIHLDQKPGSEPMAFMSENVNLQYALLNSIIDKMNNNIKKPNLEFLMPCTITKLSKGENIYRTHIHTTTHGELTTKLLIGADGRNSIVRKYANISMPGWNYLTHAVVGTLKIDPLKGPAVAFQRFLPTGPLAYLPLPDNNATFVWSTRPHIASKLLRLPEETFVKFLNASFRLDYPDLSYLYQMDFSEPSKVNEQLDWRLQVKRNSNMQVPPVITEIVSGSRAAFPLRLAHVDEYVKEGIALCGDAAHNTHPLAGQGLNTGIQDVESLISALSFAIKHGQDIGSVFSLQPYFRDRYFKNHVYLGVVDKFHKLYAMENPVVTSVRTLGLSLFDRSASLKNFILSTVANGI.

This sequence belongs to the UbiH/COQ6 family. As to quaternary structure, component of a multi-subunit COQ enzyme complex, composed of at least COQ3, COQ4, COQ5, COQ6, COQ7 and COQ9. The cofactor is FAD.

The protein localises to the mitochondrion inner membrane. The enzyme catalyses 4-hydroxy-3-(all-trans-decaprenyl)benzoate + 2 reduced [2Fe-2S]-[ferredoxin] + O2 + 2 H(+) = 3,4-dihydroxy-5-(all-trans-decaprenyl)benzoate + 2 oxidized [2Fe-2S]-[ferredoxin] + H2O. It carries out the reaction 2-methoxy-6-(all-trans-decaprenyl)phenol + 2 reduced [2Fe-2S]-[ferredoxin] + O2 + 2 H(+) = 2-methoxy-6-(all-trans-decaprenyl)benzene-1,4-diol + 2 oxidized [2Fe-2S]-[ferredoxin] + H2O. It participates in cofactor biosynthesis; ubiquinone biosynthesis. FAD-dependent monooxygenase required for two non-consecutive steps during ubiquinone biosynthesis. Required for the C5-ring hydroxylation during ubiquinone biosynthesis by catalyzing the hydroxylation of 4-hydroxy-3-(all-trans-decaprenyl)benzoic acid to 3,4-dihydroxy-5-(all-trans-decaprenyl)benzoic acid. Also acts downstream of COQ4, for the C1-hydroxylation during ubiquinone biosynthesis by catalyzing the hydroxylation of 2-methoxy-6-(all-trans-decaprenyl)phenol to 2-methoxy-6-(all-trans-decaprenyl)benzene-1,4-diol. The electrons required for the hydroxylation reaction are funneled indirectly to coq6 from NADPH via a ferredoxin/ferredoxin reductase system. The sequence is that of Ubiquinone biosynthesis monooxygenase COQ6, mitochondrial from Schizosaccharomyces pombe (strain 972 / ATCC 24843) (Fission yeast).